A 473-amino-acid chain; its full sequence is Fumarate hydratase class II 2 (473 aa).

A disordered region spans residues 1 to 28; it reads MAKSARTKTARPATRTETDSFGPIEVPS. Residues 108–110, 139–142, 149–151, and T197 each bind substrate; these read SGT, HPND, and SSN. H198 serves as the catalytic Proton donor/acceptor. The active site involves S328. Residues S329 and 334–336 contribute to the substrate site; that span reads KVN.

The protein belongs to the class-II fumarase/aspartase family. Fumarase subfamily. Homotetramer.

Its subcellular location is the cytoplasm. The enzyme catalyses (S)-malate = fumarate + H2O. Its pathway is carbohydrate metabolism; tricarboxylic acid cycle; (S)-malate from fumarate: step 1/1. Functionally, involved in the TCA cycle. Catalyzes the stereospecific interconversion of fumarate to L-malate. The polypeptide is Fumarate hydratase class II 2 (Bradyrhizobium diazoefficiens (strain JCM 10833 / BCRC 13528 / IAM 13628 / NBRC 14792 / USDA 110)).